The chain runs to 215 residues: Pyrrolidone-carboxylate peptidase (215 aa).

Active-site residues include glutamate 80, cysteine 143, and histidine 167.

It belongs to the peptidase C15 family. Homotetramer.

Its subcellular location is the cytoplasm. The catalysed reaction is Release of an N-terminal pyroglutamyl group from a polypeptide, the second amino acid generally not being Pro.. Removes 5-oxoproline from various penultimate amino acid residues except L-proline. This chain is Pyrrolidone-carboxylate peptidase, found in Bacillus cereus (strain G9842).